A 159-amino-acid polypeptide reads, in one-letter code: Aspartate carbamoyltransferase regulatory chain (159 aa).

Cys-113, Cys-118, Cys-143, and Cys-146 together coordinate Zn(2+).

It belongs to the PyrI family. In terms of assembly, contains catalytic and regulatory chains. Zn(2+) is required as a cofactor.

In terms of biological role, involved in allosteric regulation of aspartate carbamoyltransferase. The chain is Aspartate carbamoyltransferase regulatory chain from Methanococcoides burtonii (strain DSM 6242 / NBRC 107633 / OCM 468 / ACE-M).